Here is a 640-residue protein sequence, read N- to C-terminus: 1-deoxy-D-xylulose-5-phosphate synthase (640 aa).

Residues H75 and 117–119 (GHA) contribute to the thiamine diphosphate site. Residue D146 participates in Mg(2+) binding. Residues 147–148 (AA), N175, and E370 each bind thiamine diphosphate. N175 contributes to the Mg(2+) binding site.

It belongs to the transketolase family. DXPS subfamily. In terms of assembly, homodimer. It depends on Mg(2+) as a cofactor. Requires thiamine diphosphate as cofactor.

The catalysed reaction is D-glyceraldehyde 3-phosphate + pyruvate + H(+) = 1-deoxy-D-xylulose 5-phosphate + CO2. It participates in metabolic intermediate biosynthesis; 1-deoxy-D-xylulose 5-phosphate biosynthesis; 1-deoxy-D-xylulose 5-phosphate from D-glyceraldehyde 3-phosphate and pyruvate: step 1/1. Functionally, catalyzes the acyloin condensation reaction between C atoms 2 and 3 of pyruvate and glyceraldehyde 3-phosphate to yield 1-deoxy-D-xylulose-5-phosphate (DXP). This chain is 1-deoxy-D-xylulose-5-phosphate synthase, found in Chlamydia trachomatis serovar A (strain ATCC VR-571B / DSM 19440 / HAR-13).